The chain runs to 379 residues: 3-dehydroquinate synthase (379 aa).

Residues 67-72 (SGEKNK), 101-105 (GVVLD), 125-126 (TT), lysine 138, and lysine 147 each bind NAD(+). Glutamate 180, histidine 242, and histidine 258 together coordinate Zn(2+).

The protein belongs to the sugar phosphate cyclases superfamily. Dehydroquinate synthase family. The cofactor is NAD(+). Co(2+) is required as a cofactor. Requires Zn(2+) as cofactor.

It localises to the cytoplasm. The catalysed reaction is 7-phospho-2-dehydro-3-deoxy-D-arabino-heptonate = 3-dehydroquinate + phosphate. It functions in the pathway metabolic intermediate biosynthesis; chorismate biosynthesis; chorismate from D-erythrose 4-phosphate and phosphoenolpyruvate: step 2/7. Its function is as follows. Catalyzes the conversion of 3-deoxy-D-arabino-heptulosonate 7-phosphate (DAHP) to dehydroquinate (DHQ). The protein is 3-dehydroquinate synthase of Chlamydia abortus (strain DSM 27085 / S26/3) (Chlamydophila abortus).